The chain runs to 433 residues: MAKVDQNEALFERAQKTIPGGVNSPVRAFRQVGGIPRFVAKAKGSYFWDANDQRYIDLIMSWGPMIVGHANPEVVAAVQKAAETSFSYGAPTEGEIELAERICALMPSVEQVRMVSSGTEATMSALRLARGYTGRDLIIKFEGCYHGHADSLLVKVGSGLLTFADSTQNAPSSGGVPQDLVKHTLVLPYNDVAAIEEVFQKQGDQIAAVIIEPIAGNMNLIQPSKAFLAAIRTLTAKHGAVLIYDEVMTGFRVALGGAQSLQGITPDLTCLGKVMGGGMPMAAFGGKKEIMSKLAPLGNVYQAGTLSGNPVAVAAGLKTLEIVSREGFYECLTGQTQKLMAGLKAAADNNTVPFTVDSVGGMFGFYFVDQVPTSYEAVTKTNIDAFKKFFHLMLDEGVYLAPSAYEAGFISIAHDNAVLEEIIAAAESSFKKL.

Residue Lys273 is modified to N6-(pyridoxal phosphate)lysine.

Belongs to the class-III pyridoxal-phosphate-dependent aminotransferase family. HemL subfamily. Homodimer. Requires pyridoxal 5'-phosphate as cofactor.

The protein localises to the cytoplasm. The enzyme catalyses (S)-4-amino-5-oxopentanoate = 5-aminolevulinate. The protein operates within porphyrin-containing compound metabolism; protoporphyrin-IX biosynthesis; 5-aminolevulinate from L-glutamyl-tRNA(Glu): step 2/2. In Polynucleobacter necessarius subsp. necessarius (strain STIR1), this protein is Glutamate-1-semialdehyde 2,1-aminomutase.